The sequence spans 301 residues: D-psicose 3-epimerase (301 aa).

Y16 serves as a coordination point for substrate. The active-site Proton donor/acceptor is E162. E162 contributes to the Mn(2+) binding site. Substrate-binding positions include E168 and 195–198 (DTFH). Mn(2+) is bound by residues D195 and H221. R227 contacts substrate. E256 (proton donor/acceptor) is an active-site residue. Residue E256 participates in Mn(2+) binding.

It belongs to the hyi family. As to quaternary structure, homotetramer. The cofactor is Mn(2+). It depends on Co(2+) as a cofactor.

It carries out the reaction D-allulose = keto-D-fructose. Its activity is regulated as follows. Completely inhibited by EDTA and partially inhibited by Zn(2+), Mg(2+) and Cu(2+). Involved in the biosynthesis of D-psicose. Catalyzes the reversible epimerization of D-fructose at the C3 position to yield D-psicose. The enzyme is highly specific for D-psicose and shows very low activity with D-tagatose. The sequence is that of D-psicose 3-epimerase from Enterocloster bolteae (strain ATCC BAA-613 / DSM 15670 / CCUG 46953 / JCM 12243 / WAL 16351) (Clostridium bolteae).